The primary structure comprises 76 residues: Omega-conotoxin-like TxO5 (76 aa).

The N-terminal stretch at 1 to 22 (MKLTCMMIVAVLFLTAWTFVTA) is a signal peptide. Positions 23 to 48 (ITSNGLENLFPKAHHEMKNPEASKLN) are excised as a propeptide. Cystine bridges form between Cys-51–Cys-66, Cys-58–Cys-70, and Cys-65–Cys-75.

This sequence belongs to the conotoxin O1 superfamily. As to expression, expressed by the venom duct.

It localises to the secreted. In terms of biological role, omega-conotoxins act at presynaptic membranes, they bind and block voltage-gated calcium channels (Cav). This Conus textile (Cloth-of-gold cone) protein is Omega-conotoxin-like TxO5.